The following is an 89-amino-acid chain: DNA/RNA-binding protein Alba 2 (89 aa).

Position 12 is an N6-acetyllysine (Lys-12). 3 residues coordinate Zn(2+): Lys-14, Asp-18, and Asp-22.

The protein belongs to the histone-like Alba family. As to quaternary structure, forms homodimers and homotetramers. Homodimer at pH below 6.0. Forms homotetramers and higher order homooligomers at near the growth temperature of 80 degrees Celsius and pH 7.0. Interacts with Alba 1; heterodimers lack cooperative DNA-binding behavior and result in more compact chromatin structures compared to Alba 1 homodimers. Acetylated. Acetylation at Lys-12 decreases DNA-binding affinity.

Its subcellular location is the cytoplasm. The protein localises to the chromosome. Binds single-stranded DNA, RNA and double-stranded DNA. Involved in DNA compaction. The polypeptide is DNA/RNA-binding protein Alba 2 (Saccharolobus solfataricus (strain ATCC 35092 / DSM 1617 / JCM 11322 / P2) (Sulfolobus solfataricus)).